Reading from the N-terminus, the 442-residue chain is tRNA modification GTPase MnmE (442 aa).

Arginine 27, glutamate 84, and lysine 124 together coordinate (6S)-5-formyl-5,6,7,8-tetrahydrofolate. The TrmE-type G domain occupies 221-366 (GLHVVIVGAP…LLDALQAFAE (146 aa)). Residues 231 to 236 (NAGKSS), 250 to 256 (SKEAGTT), and 275 to 278 (DTAG) each bind GTP. Residues serine 235 and threonine 256 each contribute to the Mg(2+) site. Residue lysine 442 participates in (6S)-5-formyl-5,6,7,8-tetrahydrofolate binding.

This sequence belongs to the TRAFAC class TrmE-Era-EngA-EngB-Septin-like GTPase superfamily. TrmE GTPase family. In terms of assembly, homodimer. Heterotetramer of two MnmE and two MnmG subunits. It depends on K(+) as a cofactor.

It localises to the cytoplasm. In terms of biological role, exhibits a very high intrinsic GTPase hydrolysis rate. Involved in the addition of a carboxymethylaminomethyl (cmnm) group at the wobble position (U34) of certain tRNAs, forming tRNA-cmnm(5)s(2)U34. The polypeptide is tRNA modification GTPase MnmE (Brucella suis biovar 1 (strain 1330)).